We begin with the raw amino-acid sequence, 66 residues long: Cytochrome c oxidase polypeptide VIII, mitochondrial (66 aa).

The N-terminal 17 residues, 1–17, are a transit peptide targeting the mitochondrion; that stretch reads MLRYSLQARSALRGVRF. Topologically, residues 18-38 are mitochondrial matrix; that stretch reads SSSHSAPKPGSTIPFYINKKP. A helical transmembrane segment spans residues 39-59; it reads LPTLLYFGTFGVIFSIPFIVV. The Mitochondrial intermembrane portion of the chain corresponds to 60–66; it reads KYHNRNL.

The protein belongs to the cytochrome c oxidase VIIc family. In terms of assembly, component of the cytochrome c oxidase (complex IV, CIV), a multisubunit enzyme composed of a catalytic core of 3 subunits and several supernumerary subunits. The complex exists as a monomer or a dimer and forms supercomplexes (SCs) in the inner mitochondrial membrane with ubiquinol-cytochrome c oxidoreductase (cytochrome b-c1 complex, complex III, CIII).

It localises to the mitochondrion inner membrane. Its pathway is energy metabolism; oxidative phosphorylation. In terms of biological role, component of the cytochrome c oxidase, the last enzyme in the mitochondrial electron transport chain which drives oxidative phosphorylation. The respiratory chain contains 3 multisubunit complexes succinate dehydrogenase (complex II, CII), ubiquinol-cytochrome c oxidoreductase (cytochrome b-c1 complex, complex III, CIII) and cytochrome c oxidase (complex IV, CIV), that cooperate to transfer electrons derived from NADH and succinate to molecular oxygen, creating an electrochemical gradient over the inner membrane that drives transmembrane transport and the ATP synthase. Cytochrome c oxidase is the component of the respiratory chain that catalyzes the reduction of oxygen to water. Electrons originating from reduced cytochrome c in the intermembrane space (IMS) are transferred via the dinuclear copper A center (CU(A)) of subunit 2 and heme A of subunit 1 to the active site in subunit 1, a binuclear center (BNC) formed by heme A3 and copper B (CU(B)). The BNC reduces molecular oxygen to 2 water molecules using 4 electrons from cytochrome c in the IMS and 4 protons from the mitochondrial matrix. In Schizosaccharomyces pombe (strain 972 / ATCC 24843) (Fission yeast), this protein is Cytochrome c oxidase polypeptide VIII, mitochondrial (cox8).